The chain runs to 234 residues: dTDP-4-amino-4,6-dideoxyglucose formyltransferase (234 aa).

Residues asparagine 9 and 62 to 64 (HCK) each bind dTDP-4-amino-4,6-dideoxy-alpha-D-glucose. Residue 65 to 67 (QRF) participates in (6R)-10-formyltetrahydrofolate binding. Histidine 81 (proton acceptor) is an active-site residue. Residue 90-94 (GWFPQ) participates in dTDP-4-amino-4,6-dideoxy-alpha-D-glucose binding. 3 residues coordinate (6R)-10-formyltetrahydrofolate: aspartate 112, aspartate 116, and lysine 175. DTDP-4-amino-4,6-dideoxy-alpha-D-glucose is bound at residue asparagine 209.

The protein belongs to the dTDP-Qui4N formyltransferase family. In terms of assembly, homodimer.

The catalysed reaction is dTDP-4-amino-4,6-dideoxy-alpha-D-glucose + (6R)-10-formyltetrahydrofolate = dTDP-4-formamido-4,6-dideoxy-alpha-D-glucose + (6S)-5,6,7,8-tetrahydrofolate + H(+). In terms of biological role, sugar N-formyltransferase that catalyzes the conversion of dTDP-4-amino-4,6-dideoxyglucose into dTDP-4-formamido-4,6-dideoxyglucose using N(10)-formyltetrahydrofolate as the carbon source. Plays a role in virulence. The protein is dTDP-4-amino-4,6-dideoxyglucose formyltransferase of Mycobacterium bovis (strain ATCC BAA-935 / AF2122/97).